Consider the following 237-residue polypeptide: Probable 2-phosphosulfolactate phosphatase (237 aa).

This sequence belongs to the ComB family. It depends on Mg(2+) as a cofactor.

The catalysed reaction is (2R)-O-phospho-3-sulfolactate + H2O = (2R)-3-sulfolactate + phosphate. The sequence is that of Probable 2-phosphosulfolactate phosphatase from Thermus thermophilus (strain ATCC 27634 / DSM 579 / HB8).